A 761-amino-acid chain; its full sequence is Semaphorin-4A (761 aa).

Positions 1 to 32 (MALPALGLDPWSLLGLFLFQLLQLLLPTTTAG) are cleaved as a signal peptide. Residues 33-683 (GGGQGPMPRV…LAAQQSYWPH (651 aa)) lie on the Extracellular side of the membrane. The 459-residue stretch at 36-494 (QGPMPRVRYY…FSGGVWRVPR (459 aa)) folds into the Sema domain. A disulfide bond links Cys113 and Cys124. Residues Asn120 and Asn135 are each glycosylated (N-linked (GlcNAc...) asparagine). 3 cysteine pairs are disulfide-bonded: Cys142–Cys151, Cys269–Cys379, and Cys293–Cys339. Asn496 carries N-linked (GlcNAc...) asparagine glycosylation. The region spanning 496-548 (NCSVYESCVDCVLARDPHCAWDPESRTCCLLSAPNLNSWKQDMERGNPEWACA) is the PSI domain. Intrachain disulfides connect Cys497–Cys514, Cys506–Cys523, and Cys580–Cys624. The 59-residue stretch at 573 to 631 (NSILELPCPHLSALASYYWSHGPAAVPEASSTVYNGSLLLIVQDGVGGLYQCWATENGF) folds into the Ig-like C2-type domain. A glycan (N-linked (GlcNAc...) asparagine) is linked at Asn607. Residues 684 to 704 (FVTVTVLFALVLSGALIILVA) traverse the membrane as a helical segment. Residues 705 to 761 (SPLRALRARGKVQGCETLRPGEKAPLSREQHLQSPKECRTSASDVDADNNCLGTEVA) lie on the Cytoplasmic side of the membrane. The tract at residues 722-749 (LRPGEKAPLSREQHLQSPKECRTSASDV) is disordered. A compositionally biased stretch (basic and acidic residues) spans 723–743 (RPGEKAPLSREQHLQSPKECR).

The protein belongs to the semaphorin family. Interacts with PLXNB1, PLXNB2, PLXNB3, PLXND1 and TIMD2.

Its subcellular location is the cell membrane. Its function is as follows. Cell surface receptor for PLXNB1, PLXNB2, PLXNB3 and PLXND1 that plays an important role in cell-cell signaling. Regulates glutamatergic and GABAergic synapse development. Promotes the development of inhibitory synapses in a PLXNB1-dependent manner and promotes the development of excitatory synapses in a PLXNB2-dependent manner. Plays a role in priming antigen-specific T-cells, promotes differentiation of Th1 T-helper cells, and thereby contributes to adaptive immunity. Promotes phosphorylation of TIMD2. Inhibits angiogenesis. Promotes axon growth cone collapse. Inhibits axonal extension by providing local signals to specify territories inaccessible for growing axons. This is Semaphorin-4A (SEMA4A) from Homo sapiens (Human).